We begin with the raw amino-acid sequence, 578 residues long: Probable arginine--tRNA ligase, mitochondrial (578 aa).

The transit peptide at 1 to 16 (MACGFRRSIACQLSRV) directs the protein to the mitochondrion. L-arginine contacts are provided by residues 133-135 (SPN), histidine 144, tyrosine 322, aspartate 326, and glutamine 350. The 'HIGH' region motif lies at 133–144 (SPNIAKKFHVGH). Residue lysine 568 is modified to N6-acetyllysine.

This sequence belongs to the class-I aminoacyl-tRNA synthetase family.

It is found in the mitochondrion membrane. It catalyses the reaction tRNA(Arg) + L-arginine + ATP = L-arginyl-tRNA(Arg) + AMP + diphosphate. Functionally, catalyzes the attachment of arginine to tRNA(Arg) in a two-step reaction: arginine is first activated by ATP to form Arg-AMP and then transferred to the acceptor end of tRNA(Arg). This chain is Probable arginine--tRNA ligase, mitochondrial (Rars2), found in Mus musculus (Mouse).